Here is a 173-residue protein sequence, read N- to C-terminus: Peptide deformylase (173 aa).

Positions 98 and 140 each coordinate Fe cation. E141 is a catalytic residue. H144 contributes to the Fe cation binding site.

This sequence belongs to the polypeptide deformylase family. It depends on Fe(2+) as a cofactor.

It catalyses the reaction N-terminal N-formyl-L-methionyl-[peptide] + H2O = N-terminal L-methionyl-[peptide] + formate. In terms of biological role, removes the formyl group from the N-terminal Met of newly synthesized proteins. Requires at least a dipeptide for an efficient rate of reaction. N-terminal L-methionine is a prerequisite for activity but the enzyme has broad specificity at other positions. This Caulobacter sp. (strain K31) protein is Peptide deformylase.